A 1404-amino-acid polypeptide reads, in one-letter code: MRSHNDFESITIRLASPERIKEWSYGEVKKPETINYRTLKPEKDGLFCEKIFGTTKDWECYCGKFKSIRYKGVVCDKCGVEVTHSKVRRERMGHIELAAPVSHIWYYRSVPSRMGLLLDMTVNQLKSVLYFEKYVIIDPADSGRNRGELIDEEEYHGYLDEYGDKFVAGIGADAIKELLARIDVDAEARMIRQKIQDKDKISDKRILKRLEVLEAFRDSGNRPEWMVLDIVPVIPPELRPMVQLEGGRFATSDLNDLYRRVINRNNRLKRLLALKAPEIIVRNEKRMLQEAVDALFDNSRRKRAVKGKGNRPLKSISDMLKGKQGRFRQNLLGKRVDYSGRSVIVVGPELKYHEMGLPKKMALELFKPFIMKRLVDLDLAPNIKSAKKKVEAEDKEVFDVLEYVVKEHPVMLNRAPTLHRLGIQAFLPVLVEGKAIKLHPLVCHAFNADFDGDQMAIHVPLTPKAQLETWMLMLSPHNILNPANGHPICGPTQDIVLGIYYLTSELPSEPGVPLKSFSNLEEVHYAIDRGVVEFRTKISVYHQGKILETTPGRLIFNTILPEGYAYVNRPLSDKETNRIIADVYDKYGPAKTVLMLDDIKKLGYRYATLFAPTISIEDIRVSPGKVGLVGDANKEVEKADSEYRKGIITNEERRKKVIEIWTKTNDLITESMFKELEKDKGGFNPVFIMAASGARGSKQQIRQLAGMRGLMAKPSGEIIELAIRSNFREGLSVLEFFISTHGARKGLADTALKTADAGYLTRRLVDISQDVIISEDDCGTEESISLGVVKEGENVIVSLNDRVFGRYTAEDVIDPVTDQVVYPRNTLITREVGQKVENLGYDKIRVRSPLTCESKQGVCIRCYGMDMARLIPAEIGEAVGTIAAQSIGQPGTQLTMRTFHIGGAASAKVQEKEHKVSYTGIVNNINGRLITNEKSQSVFSRRGSIVIQRLIQQYKTEELSNLRVENGQKVDKGELVATSPAGENITSEMPGTIHIENGLFRILGEEAVIPVKTGTIVNVKVNDITQPNQPLAEFDPYNEVGISEIDGTVQWMDLEIGKNVRRDEDLRTSNILLKVIEQRREKLNPRIAVISGGSREEYSVPVDAIISVQDGDKVKAGDILFKIPTVAEKTRDITGGLPRVDELFEARRPKDATTLAETDGKIEISGEIVKEKRVLYIHPDNPDLEKVKVTIPIGKQIRVRNGDFVKRGDQIDDGNLDPHDILRVKGVTALQVYLVQEVQEVYRLQGVHINDKHIEVVVRQMLRKVLITDSGDTSFVNQQQIDRLVFNEENKRVIAEGGSPAESVPILLGLTKASLNTESFFSAASFQETTKVLTDAAIKGKTDNLMGLKENVIIGHMIPAGTGTKKYKDIAVFKSAYGDLDRPLEEEEEEEIPQAIAEESDAEE.

Zn(2+) contacts are provided by C60, C62, C75, and C78. Residues D449, D451, and D453 each coordinate Mg(2+). Positions 778, 852, 859, and 862 each coordinate Zn(2+). Residues 1380 to 1404 (LDRPLEEEEEEEIPQAIAEESDAEE) form a disordered region. The span at 1384–1404 (LEEEEEEEIPQAIAEESDAEE) shows a compositional bias: acidic residues.

This sequence belongs to the RNA polymerase beta' chain family. As to quaternary structure, the RNAP catalytic core consists of 2 alpha, 1 beta, 1 beta' and 1 omega subunit. When a sigma factor is associated with the core the holoenzyme is formed, which can initiate transcription. Requires Mg(2+) as cofactor. Zn(2+) serves as cofactor.

It carries out the reaction RNA(n) + a ribonucleoside 5'-triphosphate = RNA(n+1) + diphosphate. In terms of biological role, DNA-dependent RNA polymerase catalyzes the transcription of DNA into RNA using the four ribonucleoside triphosphates as substrates. This chain is DNA-directed RNA polymerase subunit beta', found in Leptospira interrogans serogroup Icterohaemorrhagiae serovar Lai (strain 56601).